The following is a 72-amino-acid chain: uncharacterized protein (72 aa).

This is an uncharacterized protein from Archaeoglobus fulgidus (strain ATCC 49558 / DSM 4304 / JCM 9628 / NBRC 100126 / VC-16).